The following is a 383-amino-acid chain: L-lactate dehydrogenase (383 aa).

One can recognise an FMN hydroxy acid dehydrogenase domain in the interval 1 to 380 (MIISSGNDYR…NTDCLVQAIK (380 aa)). Tyr-24 is a binding site for substrate. Residues Ser-106 and Gln-127 each contribute to the FMN site. Tyr-129 contributes to the substrate binding site. Thr-155 is an FMN binding site. Arg-164 contacts substrate. FMN is bound at residue Lys-251. His-275 functions as the Proton acceptor in the catalytic mechanism. Arg-278 is a binding site for substrate. 306–330 (DSGIRNGLDVVRMLALGADTVLLGR) is an FMN binding site.

The protein belongs to the FMN-dependent alpha-hydroxy acid dehydrogenase family. The cofactor is FMN.

Its subcellular location is the cell inner membrane. The enzyme catalyses (S)-lactate + A = pyruvate + AH2. Functionally, catalyzes the conversion of L-lactate to pyruvate. Is coupled to the respiratory chain. This is L-lactate dehydrogenase from Acinetobacter baumannii (strain SDF).